The chain runs to 453 residues: Alpha-2B adrenergic receptor (453 aa).

Residues 1-17 are Extracellular-facing; the sequence is MSGPAMVHQEPYSVQAT. The helical transmembrane segment at 18-42 threads the bilayer; the sequence is AAIASAITFLILFTIFGNALVILAV. The Cytoplasmic portion of the chain corresponds to 43-54; the sequence is LTSRSLRAPQNL. The chain crosses the membrane as a helical span at residues 55-80; that stretch reads FLVSLAAADILVATLIIPFSLANELL. Residues 81–90 lie on the Extracellular side of the membrane; it reads GYWYFWRAWC. C90 and C169 are joined by a disulfide. The chain crosses the membrane as a helical span at residues 91–113; it reads EVYLALDVLFCTSSIVHLCAISL. Residues 114–135 are Cytoplasmic-facing; it reads DRYWAVSRALEYNSKRTPRRIK. Residues 136-158 form a helical membrane-spanning segment; that stretch reads CIILTVWLIAAVISLPPLIYKGD. At 159–174 the chain is on the extracellular side; it reads QRPEPHGLPQCELNQE. Residues 175-198 form a helical membrane-spanning segment; that stretch reads AWYILASSIGSFFAPCLIMILVYL. Topologically, residues 199 to 375 are cytoplasmic; it reads RIYVIAKRSH…LSREKRFTFV (177 aa). The interval 214 to 329 is disordered; that stretch reads AKRGSGEGES…ASPASVFNPP (116 aa). The segment covering 303 to 314 has biased composition (acidic residues); it reads AEEDEEEVEECE. The helical transmembrane segment at 376 to 399 threads the bilayer; sequence LAVVIGVFVVCWFPFFFSYSLGAI. Topologically, residues 400–408 are extracellular; sequence CPQHCKVPH. A helical transmembrane segment spans residues 409–432; it reads GLFQFFFWIGYCNSSLNPVIYTIF. Residues 433-453 are Cytoplasmic-facing; sequence NQDFRRAFRRILCRQWTQTGW. The S-palmitoyl cysteine moiety is linked to residue C445.

The protein belongs to the G-protein coupled receptor 1 family. Adrenergic receptor subfamily. ADRA2B sub-subfamily. As to quaternary structure, interacts with RAB26. Interacts with PPP1R9B. Interacts with GGA1, GGA2 and GGA3.

It localises to the cell membrane. Alpha-2 adrenergic receptors mediate the catecholamine-induced inhibition of adenylate cyclase through the action of G proteins. The polypeptide is Alpha-2B adrenergic receptor (Adra2b) (Mus musculus (Mouse)).